Here is a 116-residue protein sequence, read N- to C-terminus: MRHKHGYRKLSRTSSHRKALLKNLAIAIIEREKIETTVPKAKELKRYIERLVTVARNADFNTHRQVFAALQSKEATKKLINEIAPKYEGRNGGYTSIVKTRIRKGDATPMAFISFI.

The protein belongs to the bacterial ribosomal protein bL17 family. In terms of assembly, part of the 50S ribosomal subunit. Contacts protein L32.

This chain is Large ribosomal subunit protein bL17, found in Aliarcobacter butzleri (strain RM4018) (Arcobacter butzleri).